We begin with the raw amino-acid sequence, 147 residues long: Hemoglobin subunit beta-1/2 (147 aa).

Residue V2 is modified to N-acetylvaline. The Globin domain maps to 3 to 147 (HLSSEEKSAV…VANALAHKYH (145 aa)). Residue T13 is modified to Phosphothreonine. Phosphoserine is present on S45. The residue at position 60 (K60) is an N6-acetyllysine. H64 provides a ligand contact to heme b. The residue at position 83 (K83) is an N6-acetyllysine. Position 93 (H93) interacts with heme b. An S-nitrosocysteine modification is found at C94. Residue K145 is modified to N6-acetyllysine.

Belongs to the globin family. As to quaternary structure, heterotetramer of two alpha chains and two beta chains. As to expression, red blood cells.

Its function is as follows. Involved in oxygen transport from the lung to the various peripheral tissues. The sequence is that of Hemoglobin subunit beta-1/2 (HBB1) from Oryctolagus cuniculus (Rabbit).